A 293-amino-acid chain; its full sequence is Elongation factor Ts (293 aa).

The involved in Mg(2+) ion dislocation from EF-Tu stretch occupies residues 80-83 (TDFV).

This sequence belongs to the EF-Ts family.

The protein localises to the cytoplasm. Functionally, associates with the EF-Tu.GDP complex and induces the exchange of GDP to GTP. It remains bound to the aminoacyl-tRNA.EF-Tu.GTP complex up to the GTP hydrolysis stage on the ribosome. This is Elongation factor Ts from Burkholderia thailandensis (strain ATCC 700388 / DSM 13276 / CCUG 48851 / CIP 106301 / E264).